The chain runs to 274 residues: Large ribosomal subunit protein uL2 (274 aa).

Positions 223-274 are disordered; the sequence is VVMNPVDHPHGGGEGRTSGGRHPVSPWGVPTKGFKTRKNKRTDKYIVRRRTK. Residues 256 to 274 show a composition bias toward basic residues; the sequence is FKTRKNKRTDKYIVRRRTK.

Belongs to the universal ribosomal protein uL2 family. In terms of assembly, part of the 50S ribosomal subunit. Forms a bridge to the 30S subunit in the 70S ribosome.

One of the primary rRNA binding proteins. Required for association of the 30S and 50S subunits to form the 70S ribosome, for tRNA binding and peptide bond formation. It has been suggested to have peptidyltransferase activity; this is somewhat controversial. Makes several contacts with the 16S rRNA in the 70S ribosome. The protein is Large ribosomal subunit protein uL2 of Vibrio atlanticus (strain LGP32) (Vibrio splendidus (strain Mel32)).